A 306-amino-acid chain; its full sequence is Curved DNA-binding protein (306 aa).

The J domain occupies 5–69 (DYYAIMGVKP…QRRAEYDQMW (65 aa)).

The protein localises to the cytoplasm. The protein resides in the nucleoid. Functionally, DNA-binding protein that preferentially recognizes a curved DNA sequence. It is probably a functional analog of DnaJ; displays overlapping activities with DnaJ, but functions under different conditions, probably acting as a molecular chaperone in an adaptive response to environmental stresses other than heat shock. Lacks autonomous chaperone activity; binds native substrates and targets them for recognition by DnaK. Its activity is inhibited by the binding of CbpM. The chain is Curved DNA-binding protein from Shigella flexneri.